The sequence spans 543 residues: Probable zinc transporter protein DDB_G0283629 (543 aa).

Residues Met-1 to Arg-175 form a disordered region. Residues Met-1–Ser-186 lie on the Cytoplasmic side of the membrane. Low complexity-rich tracts occupy residues Ser-11–Asn-26 and Asn-41–Ile-55. Basic and acidic residues-rich tracts occupy residues Asn-56–His-66 and His-76–Val-104. A compositionally biased stretch (low complexity) spans Gly-105–Gln-116. The span at Glu-130–Gly-140 shows a compositional bias: gly residues. Residues Leu-187 to Phe-207 form a helical membrane-spanning segment. Residues Ala-208 to Asp-216 are Extracellular-facing. Residues Ala-217–Ser-237 traverse the membrane as a helical segment. Residues Gln-238 to Arg-251 are Cytoplasmic-facing. A helical transmembrane segment spans residues Ala-252–Val-272. The Extracellular segment spans residues Tyr-273–Lys-289. The chain crosses the membrane as a helical span at residues Ile-290–His-310. Over Trp-311 to Tyr-375 the chain is Cytoplasmic. A disordered region spans residues Ser-319–Asn-342. A helical membrane pass occupies residues Ile-376–Trp-396. At Val-397–Lys-402 the chain is on the extracellular side. Residues Ile-403 to Leu-423 traverse the membrane as a helical segment. Residues Leu-424 to Gln-543 are Cytoplasmic-facing. Residues Lys-516–Gln-543 form a disordered region.

Belongs to the cation diffusion facilitator (CDF) transporter (TC 2.A.4) family. SLC30A subfamily.

The protein resides in the membrane. May be involved in zinc transport from the cytoplasm to either intracellular organelles or extracellular spaces. In Dictyostelium discoideum (Social amoeba), this protein is Probable zinc transporter protein DDB_G0283629.